Here is a 269-residue protein sequence, read N- to C-terminus: Regulatory protein RecX (269 aa).

It belongs to the RecX family.

The protein localises to the cytoplasm. Functionally, modulates RecA activity. This is Regulatory protein RecX from Listeria welshimeri serovar 6b (strain ATCC 35897 / DSM 20650 / CCUG 15529 / CIP 8149 / NCTC 11857 / SLCC 5334 / V8).